The chain runs to 254 residues: Hydroxyacylglutathione hydrolase (254 aa).

Zn(2+) is bound by residues His54, His56, Asp58, His59, His111, Asp130, and His168.

It belongs to the metallo-beta-lactamase superfamily. Glyoxalase II family. As to quaternary structure, monomer. Zn(2+) serves as cofactor.

It carries out the reaction an S-(2-hydroxyacyl)glutathione + H2O = a 2-hydroxy carboxylate + glutathione + H(+). It functions in the pathway secondary metabolite metabolism; methylglyoxal degradation; (R)-lactate from methylglyoxal: step 2/2. Its function is as follows. Thiolesterase that catalyzes the hydrolysis of S-D-lactoyl-glutathione to form glutathione and D-lactic acid. The protein is Hydroxyacylglutathione hydrolase of Legionella pneumophila (strain Paris).